We begin with the raw amino-acid sequence, 552 residues long: Cleavage and polyadenylation specificity factor subunit 6 (552 aa).

Positions 1–213 (MADGVDHIDI…RGRFPGAVPG (213 aa)) are necessary for interaction with NXF1. One can recognise an RRM domain in the interval 81-161 (IALYIGNLTR…QNPVVTPCNK (81 aa)). Residues 81 to 161 (IALYIGNLTR…QNPVVTPCNK (81 aa)) are necessary for interaction with NUDT21/CPSF5. The interval 81–161 (IALYIGNLTR…QNPVVTPCNK (81 aa)) is necessary for nuclear paraspeckles localization. Position 157 is a phosphothreonine (Thr157). A compositionally biased stretch (polar residues) spans 169 to 180 (MQSRKTTQSGQM). Disordered regions lie at residues 169–411 (MQSR…PLSE) and 479–552 (GIES…YRHR). The GAR signature appears at 202-206 (RGRGR). The span at 207–219 (FPGAVPGGDRFPG) shows a compositional bias: low complexity. Pro residues-rich tracts occupy residues 220-265 (PTGP…PLAG), 285-366 (GQPP…PPPT), and 377-388 (GPPPTDPYGRPP). A compositionally biased stretch (basic and acidic residues) spans 389–404 (PYDRGDYGPPGREMDT). Thr404 and Thr407 each carry phosphothreonine. The tract at residues 404–552 (TARTPLSEAE…RDREREYRHR (149 aa)) is sufficient for nuclear speckle localization. The segment at 405-552 (ARTPLSEAEF…RDREREYRHR (148 aa)) is necessary for RNA-binding. The necessary for interaction with SRSF3, SRSF7 and TRA2B/SFRS10 stretch occupies residues 481-552 (ESKSYGSGSR…RDREREYRHR (72 aa)). The interval 491 to 552 (RRERSRERDH…RDREREYRHR (62 aa)) is arg/Ser-rich domain. A compositionally biased stretch (basic and acidic residues) spans 494-504 (RSRERDHSRSR). Phosphoserine is present on residues Ser495, Ser501, Ser512, Ser514, and Ser526. A compositionally biased stretch (basic residues) spans 505–515 (EKSRRHKSRSR). The interval 511-552 (KSRSRDRHDDYYRERSRERERHRDRDRDRDRERDREREYRHR) is sufficient for nuclear targeting. Residues 516 to 552 (DRHDDYYRERSRERERHRDRDRDRDRERDREREYRHR) are compositionally biased toward basic and acidic residues.

This sequence belongs to the RRM CPSF6/7 family. Component of the cleavage factor Im (CFIm) complex which is a heterotetramer composed of two subunits of NUDT21/CPSF5 and two subunits of CPSF6 or CPSF7 or a heterodimer of CPSF6 and CPSF7. The cleavage factor Im (CFIm) complex associates with the CPSF and CSTF complexes to promote the assembly of the core mRNA 3'-processing machinery. Associates with the exon junction complex (EJC). Associates with the 80S ribosome particle. Interacts (via the RRM domain) with NUDT21/CPSF5; this interaction is direct and enhances binding to RNA. Interacts (via Arg/Ser-rich domain) with FIP1L1 (preferentially via unphosphorylated form and Arg/Glu/Asp-rich domain); this interaction mediates, at least in part, the interaction between the CFIm and CPSF complexes and may be inhibited by CPSF6 hyper-phosphorylation. Interacts (via N-terminus) with NXF1; this interaction is direct. Interacts with SRSF3. Interacts with SRSF7. Interacts with SNRNP70. Interacts with TRA2B/SFRS10. Interacts with UPF1. Interacts with UPF3B. Interacts with VIRMA. Interacts (via Arg/Ser-rich domain) with TNPO3; promoting nuclear import of CPSF6 independently of its phosphorylation status. Interacts with YTHDC1. Phosphorylated. Phosphorylated in the Arg/Ser-rich domain by SRPK1, in vitro. Post-translationally, symmetrically dimethylated on arginine residues in the GAR motif by PRMT5 in a WDR77- and CLNS1A-dependent manner. Asymmetrically dimethylated on arginine residues in the GAR motif by PRMT1.

It is found in the nucleus. Its subcellular location is the nucleoplasm. The protein resides in the nucleus speckle. The protein localises to the cytoplasm. Component of the cleavage factor Im (CFIm) complex that functions as an activator of the pre-mRNA 3'-end cleavage and polyadenylation processing required for the maturation of pre-mRNA into functional mRNAs. CFIm contributes to the recruitment of multiprotein complexes on specific sequences on the pre-mRNA 3'-end, so called cleavage and polyadenylation signals (pA signals). Most pre-mRNAs contain multiple pA signals, resulting in alternative cleavage and polyadenylation (APA) producing mRNAs with variable 3'-end formation. The CFIm complex acts as a key regulator of cleavage and polyadenylation site choice during APA through its binding to 5'-UGUA-3' elements localized in the 3'-untranslated region (UTR) for a huge number of pre-mRNAs. CPSF6 enhances NUDT21/CPSF5 binding to 5'-UGUA-3' elements localized upstream of pA signals and promotes RNA looping, and hence activates directly the mRNA 3'-processing machinery. Plays a role in mRNA export. The protein is Cleavage and polyadenylation specificity factor subunit 6 of Pongo abelii (Sumatran orangutan).